Here is a 30-residue protein sequence, read N- to C-terminus: Basic phospholipase A2 CM-I (30 aa).

The protein belongs to the phospholipase A2 family. Group I subfamily. Requires Ca(2+) as cofactor. As to expression, expressed by the venom gland.

It is found in the secreted. The catalysed reaction is a 1,2-diacyl-sn-glycero-3-phosphocholine + H2O = a 1-acyl-sn-glycero-3-phosphocholine + a fatty acid + H(+). In terms of biological role, snake venom phospholipase A2 (PLA2) that shows weak anticoagulant activity. Is more catalytically active than the strong anticoagulant protein CM-IV found in this venom. Acts by inhibiting the complex composed of tissue factor (F3) and coagulation factor VIIa (F7) (TF-VIIa complex) by only enzymatic mechanism. PLA2 catalyzes the calcium-dependent hydrolysis of the 2-acyl groups in 3-sn-phosphoglycerides. The sequence is that of Basic phospholipase A2 CM-I from Naja nigricollis (Black-necked spitting cobra).